We begin with the raw amino-acid sequence, 640 residues long: 1,4-alpha-glucan branching enzyme GlgB (640 aa).

The Nucleophile role is filled by Asp318. Residue Glu371 is the Proton donor of the active site.

This sequence belongs to the glycosyl hydrolase 13 family. GlgB subfamily. Monomer.

The enzyme catalyses Transfers a segment of a (1-&gt;4)-alpha-D-glucan chain to a primary hydroxy group in a similar glucan chain.. It participates in glycan biosynthesis; glycogen biosynthesis. Its function is as follows. Catalyzes the formation of the alpha-1,6-glucosidic linkages in glycogen by scission of a 1,4-alpha-linked oligosaccharide from growing alpha-1,4-glucan chains and the subsequent attachment of the oligosaccharide to the alpha-1,6 position. This chain is 1,4-alpha-glucan branching enzyme GlgB, found in Francisella tularensis subsp. mediasiatica (strain FSC147).